Reading from the N-terminus, the 331-residue chain is Adenosine deaminase (331 aa).

His12 and His14 together coordinate Zn(2+). His14 and Asp16 together coordinate substrate. Position 197 (His197) interacts with Zn(2+). Glu200 acts as the Proton donor in catalysis. Residue Asp278 coordinates Zn(2+).

It belongs to the metallo-dependent hydrolases superfamily. Adenosine and AMP deaminases family. Adenosine deaminase subfamily. Requires Zn(2+) as cofactor.

The enzyme catalyses adenosine + H2O + H(+) = inosine + NH4(+). It carries out the reaction 2'-deoxyadenosine + H2O + H(+) = 2'-deoxyinosine + NH4(+). Functionally, catalyzes the hydrolytic deamination of adenosine and 2-deoxyadenosine. The protein is Adenosine deaminase of Shewanella halifaxensis (strain HAW-EB4).